The primary structure comprises 140 residues: Ribosome-binding factor A (140 aa).

A disordered region spans residues 1-23 (MLRDRNRSGVRGGAEGPSQRQRR).

Belongs to the RbfA family. As to quaternary structure, monomer. Binds 30S ribosomal subunits, but not 50S ribosomal subunits or 70S ribosomes.

Its subcellular location is the cytoplasm. In terms of biological role, one of several proteins that assist in the late maturation steps of the functional core of the 30S ribosomal subunit. Associates with free 30S ribosomal subunits (but not with 30S subunits that are part of 70S ribosomes or polysomes). Required for efficient processing of 16S rRNA. May interact with the 5'-terminal helix region of 16S rRNA. The polypeptide is Ribosome-binding factor A (Acidiphilium cryptum (strain JF-5)).